Consider the following 255-residue polypeptide: Octanoyltransferase (255 aa).

The interval 1 to 27 (MPPASDAHAAPDAAASTSASPQSCAAP) is disordered. One can recognise a BPL/LPL catalytic domain in the interval 59-240 (PDTGDEIWVV…RLIANLDGAT (182 aa)). Residues 99–106 (RGGQITYH), 171–173 (ALG), and 184–186 (GLS) each bind substrate. The active-site Acyl-thioester intermediate is the Cys202.

This sequence belongs to the LipB family.

The protein localises to the cytoplasm. The enzyme catalyses octanoyl-[ACP] + L-lysyl-[protein] = N(6)-octanoyl-L-lysyl-[protein] + holo-[ACP] + H(+). Its pathway is protein modification; protein lipoylation via endogenous pathway; protein N(6)-(lipoyl)lysine from octanoyl-[acyl-carrier-protein]: step 1/2. Its function is as follows. Catalyzes the transfer of endogenously produced octanoic acid from octanoyl-acyl-carrier-protein onto the lipoyl domains of lipoate-dependent enzymes. Lipoyl-ACP can also act as a substrate although octanoyl-ACP is likely to be the physiological substrate. This chain is Octanoyltransferase, found in Burkholderia thailandensis (strain ATCC 700388 / DSM 13276 / CCUG 48851 / CIP 106301 / E264).